The sequence spans 20 residues: Allergen Asp fl 2 (20 aa).

In Aspergillus flavus, this protein is Allergen Asp fl 2.